The chain runs to 587 residues: Aspartate--tRNA ligase (587 aa).

Residue E174 participates in L-aspartate binding. Residues 198-201 (QTFK) are aspartate. R220 contacts L-aspartate. ATP-binding positions include 220–222 (RDE) and Q229. H447 serves as a coordination point for L-aspartate. E481 lines the ATP pocket. Residue R488 participates in L-aspartate binding. 533–536 (GLDR) contacts ATP.

The protein belongs to the class-II aminoacyl-tRNA synthetase family. Type 1 subfamily. In terms of assembly, homodimer.

Its subcellular location is the cytoplasm. It catalyses the reaction tRNA(Asp) + L-aspartate + ATP = L-aspartyl-tRNA(Asp) + AMP + diphosphate. Its function is as follows. Catalyzes the attachment of L-aspartate to tRNA(Asp) in a two-step reaction: L-aspartate is first activated by ATP to form Asp-AMP and then transferred to the acceptor end of tRNA(Asp). The protein is Aspartate--tRNA ligase of Porphyromonas gingivalis (strain ATCC BAA-308 / W83).